Consider the following 223-residue polypeptide: B-cell antigen receptor complex-associated protein alpha chain (223 aa).

The N-terminal stretch at 1-31 is a signal peptide; it reads MPEGPQALQSPPATIFLLLISAAGLGPGCQA. One can recognise an Ig-like C2-type domain in the interval 32–120; it reads LWVEWGPPSV…KIQRSCGTYL (89 aa). The Extracellular portion of the chain corresponds to 32–140; sequence LWVEWGPPSV…LDMGEGTKNN (109 aa). C53 and C104 are disulfide-bonded. 4 N-linked (GlcNAc...) asparagine glycosylation sites follow: N56, N61, N71, and N95. A helical membrane pass occupies residues 141-161; sequence IITAEGIILLICAVVPGTLLL. Residues 162-223 lie on the Cytoplasmic side of the membrane; it reads FRKRWQNMKF…HIGDAQLEKP (62 aa). Positions 174 to 202 constitute an ITAM domain; sequence DIQDDYEDENLYEGLNLDDCSMYEDISRG. Y185 is modified (phosphotyrosine; by SRC-type Tyr-kinases). Y196 is modified (phosphotyrosine). Asymmetric dimethylarginine; by PRMT1 is present on R201. Residue Y207 is modified to Phosphotyrosine; by Tyr-kinases.

As to quaternary structure, heterodimer of alpha and beta chains; disulfide-linked. Part of the B-cell antigen receptor complex where the alpha/beta chain heterodimer is non-covalently associated with an antigen-specific membrane-bound surface immunoglobulin of two heavy chains and two light chains. Interacts through its phosphorylated ITAM domain with the SH2 domains of SYK which stimulates SYK autophosphorylation and activation. Also interacts, when phosphorylated on Tyr-207, with the SH2 domain of BLNK/SLP65, bringing BLNK into proximity with SYK and allowing SYK to phosphorylate BLNK which is necessary for trafficking of the BCR to late endosomes. Interacts with Src-family tyrosine kinases including FYN and LYN, increasing their activity. Phosphorylated on tyrosine, serine and threonine residues upon B-cell activation. Phosphorylation of tyrosine residues by Src-family kinases, including LYN, is an early and essential feature of the BCR signaling cascade. The phosphorylated tyrosines serve as docking sites for SH2-domain containing kinases, leading to their activation which in turn leads to phosphorylation of downstream targets. Phosphorylation of serine and threonine residues may prevent subsequent tyrosine phosphorylation. In terms of processing, arginine methylation in the ITAM domain may interfere with the binding of SYK. It promotes signals leading to B-cell differentiation. In terms of tissue distribution, B-cells.

It localises to the cell membrane. In terms of biological role, required in cooperation with CD79B for initiation of the signal transduction cascade activated by binding of antigen to the B-cell antigen receptor complex (BCR) which leads to internalization of the complex, trafficking to late endosomes and antigen presentation. Also required for BCR surface expression and for efficient differentiation of pro- and pre-B-cells. Stimulates SYK autophosphorylation and activation. Binds to BLNK, bringing BLNK into proximity with SYK and allowing SYK to phosphorylate BLNK. Also interacts with and increases activity of some Src-family tyrosine kinases. Represses BCR signaling during development of immature B-cells. This is B-cell antigen receptor complex-associated protein alpha chain (CD79A) from Bos taurus (Bovine).